Here is a 199-residue protein sequence, read N- to C-terminus: Transgelin-2 (199 aa).

A2 is subject to N-acetylalanine. S11 carries the post-translational modification Phosphoserine. An N6-acetyllysine mark is found at K17 and K20. The Calponin-homology (CH) domain occupies 24–136 (ADLEQILIQW…RTLMNLGGLA (113 aa)). A Phosphoserine modification is found at S163. K171 is covalently cross-linked (Glycyl lysine isopeptide (Lys-Gly) (interchain with G-Cter in SUMO2)). The stretch at 174 to 199 (IGLQMGTNRGASQAGMTGYGMPRQIL) is one Calponin-like repeat. T180 bears the Phosphothreonine mark. Residues R182 and R196 each carry the omega-N-methylarginine modification.

The protein belongs to the calponin family.

This is Transgelin-2 (Tagln2) from Mus musculus (Mouse).